The following is a 273-amino-acid chain: Light-independent protochlorophyllide reductase iron-sulfur ATP-binding protein (273 aa).

ATP contacts are provided by residues 12 to 17 and lysine 41; that span reads GIGKST. Serine 16 serves as a coordination point for Mg(2+). The [4Fe-4S] cluster site is built by cysteine 97 and cysteine 131. Residue 182–183 participates in ATP binding; sequence NR.

Belongs to the NifH/BchL/ChlL family. In terms of assembly, homodimer. Protochlorophyllide reductase is composed of three subunits; BchL, BchN and BchB. It depends on [4Fe-4S] cluster as a cofactor.

The enzyme catalyses chlorophyllide a + oxidized 2[4Fe-4S]-[ferredoxin] + 2 ADP + 2 phosphate = protochlorophyllide a + reduced 2[4Fe-4S]-[ferredoxin] + 2 ATP + 2 H2O. Its pathway is porphyrin-containing compound metabolism; bacteriochlorophyll biosynthesis (light-independent). In terms of biological role, component of the dark-operative protochlorophyllide reductase (DPOR) that uses Mg-ATP and reduced ferredoxin to reduce ring D of protochlorophyllide (Pchlide) to form chlorophyllide a (Chlide). This reaction is light-independent. The L component serves as a unique electron donor to the NB-component of the complex, and binds Mg-ATP. In Roseiflexus sp. (strain RS-1), this protein is Light-independent protochlorophyllide reductase iron-sulfur ATP-binding protein.